A 331-amino-acid polypeptide reads, in one-letter code: Probable endo-beta-1,4-glucanase B (331 aa).

The N-terminal stretch at 1-18 is a signal peptide; that stretch reads MKFQSTLLLAAAAGSALA. Residues Asn38 and Asn100 are each glycosylated (N-linked (GlcNAc...) asparagine). The active-site Proton donor is the Glu160. Asn211 is a glycosylation site (N-linked (GlcNAc...) asparagine). The active-site Nucleophile is Glu266. Asn288 carries N-linked (GlcNAc...) asparagine glycosylation.

Belongs to the glycosyl hydrolase 5 (cellulase A) family.

The protein localises to the secreted. The catalysed reaction is Endohydrolysis of (1-&gt;4)-beta-D-glucosidic linkages in cellulose, lichenin and cereal beta-D-glucans.. Its function is as follows. Has endoglucanase activity on substrates containing beta-1,4 glycosidic bonds, like in carboxymethylcellulose (CMC), hydroxyethylcellulose (HEC) and beta-glucan. Involved in the degradation of complex natural cellulosic substrates. This chain is Probable endo-beta-1,4-glucanase B (eglB), found in Aspergillus niger (strain ATCC MYA-4892 / CBS 513.88 / FGSC A1513).